The following is a 349-amino-acid chain: D-arabinitol dehydrogenase 1 (349 aa).

Zn(2+) contacts are provided by Cys46, His67, Cys97, Cys100, Cys103, Cys111, and Glu151.

Belongs to the zinc-containing alcohol dehydrogenase family. Zn(2+) is required as a cofactor.

It localises to the cell projection. It carries out the reaction D-arabinitol + NADP(+) = D-xylulose + NADPH + H(+). The catalysed reaction is D-arabinitol + NADP(+) = D-ribulose + NADPH + H(+). In terms of biological role, D-arabinitol dehydrogenase which mostly produces D-arabinitol in haustoria, the appendages of the parasitic fungus that penetrate the host's tissue and draws nutrients from it. D-arabinitol accumulation may serve as a carbohydrate storage compound. D-arabinitol is also capable of quenching reactive oxygen species involved in host plant defense reactions, thus providing protection for the rust fungus during the pathogenic interaction. The polypeptide is D-arabinitol dehydrogenase 1 (ARD1) (Uromyces fabae (Rust fungus)).